A 195-amino-acid polypeptide reads, in one-letter code: Thymidine kinase (195 aa).

ATP-binding positions include 15–22 and 88–91; these read GSMFSGKS and DEVQ. Glutamate 89 serves as the catalytic Proton acceptor. Zn(2+) is bound by residues cysteine 145, cysteine 148, cysteine 183, and residue 186.

Belongs to the thymidine kinase family. As to quaternary structure, homotetramer.

It is found in the cytoplasm. It carries out the reaction thymidine + ATP = dTMP + ADP + H(+). In Bacillus cereus (strain ATCC 10987 / NRS 248), this protein is Thymidine kinase.